The following is a 63-amino-acid chain: Large ribosomal subunit protein bL28 (63 aa).

Residues 1–20 (MSRRCAITGKGPMVGNNVSH) form a disordered region.

Belongs to the bacterial ribosomal protein bL28 family.

This is Large ribosomal subunit protein bL28 from Campylobacter curvus (strain 525.92).